The following is a 368-amino-acid chain: P2X receptor C (368 aa).

Residues 1-24 (MLDWDSILAYNTIKVVRIRDRRLG) are Cytoplasmic-facing. Residues 25 to 45 (ILHLIFMIAIISYVVIYSAII) traverse the membrane as a helical segment. At 46–368 (KKGYLSIEEP…DKLYHNIEAL (323 aa)) the chain is on the lumenal side. Residues 282–295 (RHAIRLIFIQTGVI) form a pore-forming motif region.

This sequence belongs to the P2X receptor family.

It is found in the contractile vacuole membrane. P2X receptors are ligand-gated ion channels that play a role in intracellular calcium signaling. ATP does not evoke inward currents in p2xC. Not essential for osmoregulation. This Dictyostelium discoideum (Social amoeba) protein is P2X receptor C (p2xC).